We begin with the raw amino-acid sequence, 204 residues long: Urease accessory protein UreG (204 aa).

12 to 19 contributes to the GTP binding site; that stretch reads GPVGSGKT.

This sequence belongs to the SIMIBI class G3E GTPase family. UreG subfamily. As to quaternary structure, homodimer. UreD, UreF and UreG form a complex that acts as a GTP-hydrolysis-dependent molecular chaperone, activating the urease apoprotein by helping to assemble the nickel containing metallocenter of UreC. The UreE protein probably delivers the nickel.

Its subcellular location is the cytoplasm. Facilitates the functional incorporation of the urease nickel metallocenter. This process requires GTP hydrolysis, probably effectuated by UreG. The polypeptide is Urease accessory protein UreG (Stutzerimonas stutzeri (strain A1501) (Pseudomonas stutzeri)).